We begin with the raw amino-acid sequence, 1376 residues long: YLP motif-containing protein 1 (1376 aa).

2 disordered regions span residues 1–335 (MYPN…PEED) and 511–1058 (STIP…PPGR). Residues 14-27 (YPPPPVPPPPPPVA) show a composition bias toward pro residues. 2 stretches are compositionally biased toward low complexity: residues 31–50 (ASPGPGYSSSTAPAAPSSSG) and 59–80 (LAQLQQLQQMHQKQMQCVLQPH). Pro residues-rich tracts occupy residues 81–93 (HLPPPPLPPPPVM), 102–114 (QPPPPPMPPPPGP), 148–158 (PESPPVPPGSY), 166–176 (MPPPQPPPSYY), and 184–204 (YLPPAQPSPSKPQLPPPPPSI). 2 stretches are compositionally biased toward polar residues: residues 207–216 (GNKTTIQQEP) and 238–260 (STMTPQEQQQYWYRQHLLSLQQR). Positions 261–271 (TKVHLPGHKKG) are enriched in basic residues. Over residues 277-286 (DVPEPIKEEA) the composition is skewed to basic and acidic residues. 4 stretches are compositionally biased toward pro residues: residues 303 to 320 (PPLPPPNEEMPPPLPPEE), 511 to 537 (STIPPPGMPPPVMPPSLPTSVPPPGMP), 545 to 594 (LPPP…PQGM), and 632 to 641 (PPSPYHPPPQ). The segment covering 642 to 671 (SEQGNSKPLNKVFSSEQGLGESSSALSQSV) has biased composition (polar residues). At lysine 675 the chain carries N6-methyllysine. Over residues 698–714 (RGPREQKEQLQKLKDFG) the composition is skewed to basic and acidic residues. Composition is skewed to pro residues over residues 738–753 (MYPPPGSYRPPPPMGK), 773–796 (TRPPVPIPPPPPPPPPPPPPPPVI), and 840–870 (PVLPPPPVHPSIPPPGPMPMGMPPMSKPPPV). Lysine 886 is covalently cross-linked (Glycyl lysine isopeptide (Lys-Gly) (interchain with G-Cter in SUMO2)). 4 stretches are compositionally biased toward basic and acidic residues: residues 896–930 (ITLRPDPLPERSAFDADHAGQRDRYDRDRDREPYF), 937–1004 (TDHR…DRPP), 1013–1023 (GERRTYPEERM), and 1039–1058 (RVEKKPESKNVDDILKPPGR). Lysine 943 is covalently cross-linked (Glycyl lysine isopeptide (Lys-Gly) (interchain with G-Cter in SUMO2)). An involved in interaction with PPP1CA region spans residues 1326 to 1333 (KKRVRWAD).

Interacts with PPP1CA and NCOA5. Forms a complex with ILF2, ILF3, KHDRBS1, RBMX, NCOA5 and PPP1CA. High level expression seen in the brain, adipose tissue, heart and kidney, with a low level expression in muscle, spleen and lung (at protein level).

It is found in the nucleus. It localises to the nucleus speckle. Plays a role in the reduction of telomerase activity during differentiation of embryonic stem cells by binding to the core promoter of TERT and controlling its down-regulation. The chain is YLP motif-containing protein 1 (Ylpm1) from Rattus norvegicus (Rat).